The chain runs to 206 residues: Ribosomal RNA small subunit methyltransferase G (206 aa).

S-adenosyl-L-methionine-binding positions include glycine 73, leucine 78, 124–125, and arginine 139; that span reads VE.

This sequence belongs to the methyltransferase superfamily. RNA methyltransferase RsmG family.

The protein localises to the cytoplasm. The enzyme catalyses guanosine(527) in 16S rRNA + S-adenosyl-L-methionine = N(7)-methylguanosine(527) in 16S rRNA + S-adenosyl-L-homocysteine. Specifically methylates the N7 position of guanine in position 527 of 16S rRNA. In Pectobacterium atrosepticum (strain SCRI 1043 / ATCC BAA-672) (Erwinia carotovora subsp. atroseptica), this protein is Ribosomal RNA small subunit methyltransferase G.